A 342-amino-acid chain; its full sequence is MTVATPNLTTVPVPPSDSRERVKQFMQTLQDEICAGLEALDGGGQFREDSWERPEGGGGRSRVIREGNVFEQGGVNFSEVWGEKLPPSILAQYPEAAGHGYFATGTSMVLHPRNPYIPTVHLNYRYFEAGPVWWFGGGADLTPYYPFAEDAKHFHSSFKAACDRHYPQFYDVFKLWCDEYFFLKHRGETRGIGGIFFDYQDGRGDLYNKGPAPSGPAGQKAAEVGIVSDLNWEKLFAFAQDCGRTFLPAYSPIVERRKDTPWGDRERQFQLYRRGRYVEFNLVYDRGTIFGLQTNGRTESILMSLPPLVRWEYMYQPEAGSREQELYDVFLKPQDWVNWPTA.

Ser107 contacts substrate. A divalent metal cation contacts are provided by His111 and His121. His121 functions as the Proton donor in the catalytic mechanism. 123 to 125 is a substrate binding site; that stretch reads NYR. The a divalent metal cation site is built by His155 and His185. The segment at 277–312 is important for dimerization; sequence YVEFNLVYDRGTIFGLQTNGRTESILMSLPPLVRWE.

Belongs to the aerobic coproporphyrinogen-III oxidase family. As to quaternary structure, homodimer. The cofactor is a divalent metal cation.

The protein localises to the cytoplasm. It carries out the reaction coproporphyrinogen III + O2 + 2 H(+) = protoporphyrinogen IX + 2 CO2 + 2 H2O. It functions in the pathway porphyrin-containing compound metabolism; protoporphyrin-IX biosynthesis; protoporphyrinogen-IX from coproporphyrinogen-III (O2 route): step 1/1. Its function is as follows. Involved in the heme and chlorophyll biosynthesis. Catalyzes the aerobic oxidative decarboxylation of propionate groups of rings A and B of coproporphyrinogen-III to yield the vinyl groups in protoporphyrinogen-IX. In Synechococcus sp. (strain ATCC 27144 / PCC 6301 / SAUG 1402/1) (Anacystis nidulans), this protein is Oxygen-dependent coproporphyrinogen-III oxidase.